Reading from the N-terminus, the 607-residue chain is Glutamine--fructose-6-phosphate aminotransferase [isomerizing] (607 aa).

The active-site Nucleophile; for GATase activity is C2. Residues 2–218 (CGIIGYSGSK…DGDVVLVTKD (217 aa)) form the Glutamine amidotransferase type-2 domain. 2 consecutive SIS domains span residues 280-424 (FDEQ…KLGK) and 457-597 (IAKK…VDKP). K602 (for Fru-6P isomerization activity) is an active-site residue.

In terms of assembly, homodimer.

The protein resides in the cytoplasm. It catalyses the reaction D-fructose 6-phosphate + L-glutamine = D-glucosamine 6-phosphate + L-glutamate. Its function is as follows. Catalyzes the first step in hexosamine metabolism, converting fructose-6P into glucosamine-6P using glutamine as a nitrogen source. The polypeptide is Glutamine--fructose-6-phosphate aminotransferase [isomerizing] (Fusobacterium nucleatum subsp. nucleatum (strain ATCC 25586 / DSM 15643 / BCRC 10681 / CIP 101130 / JCM 8532 / KCTC 2640 / LMG 13131 / VPI 4355)).